The following is a 344-amino-acid chain: Tetraacyldisaccharide 4'-kinase (344 aa).

Residue 65–72 participates in ATP binding; it reads HAGGTGKT.

It belongs to the LpxK family.

The catalysed reaction is a lipid A disaccharide + ATP = a lipid IVA + ADP + H(+). It participates in glycolipid biosynthesis; lipid IV(A) biosynthesis; lipid IV(A) from (3R)-3-hydroxytetradecanoyl-[acyl-carrier-protein] and UDP-N-acetyl-alpha-D-glucosamine: step 6/6. Its function is as follows. Transfers the gamma-phosphate of ATP to the 4'-position of a tetraacyldisaccharide 1-phosphate intermediate (termed DS-1-P) to form tetraacyldisaccharide 1,4'-bis-phosphate (lipid IVA). This chain is Tetraacyldisaccharide 4'-kinase, found in Neisseria meningitidis serogroup A / serotype 4A (strain DSM 15465 / Z2491).